Consider the following 384-residue polypeptide: MTQPAIYLDNNATTRVFPEVVAAMLPYFTEHFGNASSGHGFGAQAGLGLRKARLAVAALIGAASEQEILFTSGGTEANTTAIRSALAVQDGRREIIISAVEHPAILMLAADLEKTEGVRVHRIPVDHLGRLDLAAYRAALSDRVAVASIMWANNRYDLPVPQLAAEAHAAGALFHTDAVQAVGKLPMSLADTEIDMLSLSGHKFHGPKGVGALYLRKGVAFRPLLRGGKQERGRRAGTENVPALVGMGLAAEIVAARMAADLSRIATLRDWLESGILALGGCQRLGDPANRLANTCTLAFDRIDSEAVLTKLARAGIAISTGSACASGAMEPSHVTRAMAVPFTAAHGVVRFSLSADTTAAELSRVLAILPEILAELRPVPVTA.

Pyridoxal 5'-phosphate is bound by residues 74–75 (GT), Asn154, Gln180, and 200–202 (SGH). Lys203 bears the N6-(pyridoxal phosphate)lysine mark. Thr238 provides a ligand contact to pyridoxal 5'-phosphate. Cys325 serves as the catalytic Cysteine persulfide intermediate. Residue Cys325 participates in [2Fe-2S] cluster binding.

It belongs to the class-V pyridoxal-phosphate-dependent aminotransferase family. NifS/IscS subfamily. Homodimer. Requires pyridoxal 5'-phosphate as cofactor.

The enzyme catalyses (sulfur carrier)-H + L-cysteine = (sulfur carrier)-SH + L-alanine. Catalyzes the removal of elemental sulfur atoms from cysteine to produce alanine. Seems to participate in the biosynthesis of the nitrogenase metalloclusters by providing the inorganic sulfur required for the Fe-S core formation. This is Cysteine desulfurase from Rhodobacter capsulatus (Rhodopseudomonas capsulata).